A 943-amino-acid polypeptide reads, in one-letter code: Netrin receptor UNC5B-a (943 aa).

The signal sequence occupies residues 1–30; it reads MYLSRNPSGAALAAILVALILSCNFPSSTA. Topologically, residues 31-380 are extracellular; it reads GIEYSDVLPD…LESTGDVALY (350 aa). The region spanning 51 to 148 is the Ig-like domain; it reads PHFLLEPEDA…AGTTKSKRSY (98 aa). 9 cysteine pairs are disulfide-bonded: cysteine 72–cysteine 133, cysteine 84–cysteine 131, cysteine 177–cysteine 228, cysteine 261–cysteine 298, cysteine 265–cysteine 302, cysteine 276–cysteine 288, cysteine 317–cysteine 351, cysteine 321–cysteine 356, and cysteine 329–cysteine 341. Residues 150-245 enclose the Ig-like C2-type domain; it reads RIAYLRKNFD…KRRSTTATVI (96 aa). The N-linked (GlcNAc...) asparagine glycan is linked to asparagine 225. 2 consecutive TSP type-1 domains span residues 249–303 and 305–357; these read NGGW…TMCP and DGGW…GLCM. Asparagine 350 carries N-linked (GlcNAc...) asparagine glycosylation. A helical transmembrane segment spans residues 381 to 401; it reads AGLVVAIFIVIILLMAVGIVV. Residues 402–943 are Cytoplasmic-facing; the sequence is YRRNCREFDT…MLVMATDGDC (542 aa). Residues 542–685 form the ZU5 domain; that stretch reads NSVTGTFGSL…LGTYAFVGES (144 aa). Residues 688–836 are UPA domain; that stretch reads RSAIKRLQLA…LEENVKSFDP (149 aa). Residues 863 to 941 enclose the Death domain; it reads KICNSLDAPN…EMMLVMATDG (79 aa).

This sequence belongs to the unc-5 family. Interacts (via extracellular domain) with flrt3 (via extracellular domain). Interacts with rnd1. Post-translationally, phosphorylated on cytoplasmic tyrosine residues. In the developing visual system, it is expressed within the developing optic vesicles and later become restricted to the dorsal ciliary marginal zone, a site of retinoblast proliferation and differentiation.

The protein resides in the cell membrane. In terms of biological role, plays a role in cell-cell adhesion during embryonic development. Receptor for netrin required for axon guidance. Mediates axon repulsion of neuronal growth cones in the developing nervous system upon ligand binding. In Xenopus laevis (African clawed frog), this protein is Netrin receptor UNC5B-a (unc5b-a).